Here is a 213-residue protein sequence, read N- to C-terminus: Proton-translocating ferredoxin:NAD(+) oxidoreductase complex subunit E (213 aa).

Helical transmembrane passes span 11–31, 39–59, 69–89, 93–113, 128–148, and 170–190; these read GLIAENPIFVLALSLCPALAT, FTMGICVLFVITCNNTVVSII, VPVYITCIATIVTVVELVMQA, LLYKQLGIYLALVVVFAIILA, FFDGLGMGCGFTLALTIIGMI, and ALIMILPPGGFILIGYLVAIV.

It belongs to the NqrDE/RnfAE family. In terms of assembly, the complex is composed of six subunits: RnfA, RnfB, RnfC, RnfD, RnfE and RnfG.

It localises to the cell membrane. Part of a membrane-bound complex that couples electron transfer with translocation of ions across the membrane. Couples electron transfer from reduced ferredoxin to NAD(+) with translocation of H(+) out of the cell. Essential for energy conservation during autotrophic growth. Contributes to ATP synthesis during heterotrophic growth. In Clostridium ljungdahlii (strain ATCC 55383 / DSM 13528 / PETC), this protein is Proton-translocating ferredoxin:NAD(+) oxidoreductase complex subunit E.